We begin with the raw amino-acid sequence, 85 residues long: uncharacterized protein (85 aa).

3 helical membrane-spanning segments follow: residues leucine 4 to alanine 24, serine 27 to glutamate 47, and arginine 61 to alanine 81.

The protein localises to the cell membrane. This is an uncharacterized protein from Pseudomonas aeruginosa (strain ATCC 15692 / DSM 22644 / CIP 104116 / JCM 14847 / LMG 12228 / 1C / PRS 101 / PAO1).